We begin with the raw amino-acid sequence, 154 residues long: Transcriptional repressor NrdR (154 aa).

The segment at 3–34 (CPHCHKNGSRVVDSRPSEDGSFIRRRRECIHC) is a zinc-finger region. The region spanning 49 to 139 (LLVIKKDGTR…VYRQFKDVDA (91 aa)) is the ATP-cone domain.

It belongs to the NrdR family. Zn(2+) is required as a cofactor.

Functionally, negatively regulates transcription of bacterial ribonucleotide reductase nrd genes and operons by binding to NrdR-boxes. The protein is Transcriptional repressor NrdR of Limosilactobacillus reuteri (strain DSM 20016) (Lactobacillus reuteri).